The chain runs to 704 residues: Elongation factor G (704 aa).

One can recognise a tr-type G domain in the interval 8-291; it reads DRVRNIGIMA…AVIDYLASPV (284 aa). GTP is bound by residues 17-24, 90-94, and 144-147; these read AHIDAGKT, DTPGH, and NKMD.

The protein belongs to the TRAFAC class translation factor GTPase superfamily. Classic translation factor GTPase family. EF-G/EF-2 subfamily.

The protein localises to the cytoplasm. Functionally, catalyzes the GTP-dependent ribosomal translocation step during translation elongation. During this step, the ribosome changes from the pre-translocational (PRE) to the post-translocational (POST) state as the newly formed A-site-bound peptidyl-tRNA and P-site-bound deacylated tRNA move to the P and E sites, respectively. Catalyzes the coordinated movement of the two tRNA molecules, the mRNA and conformational changes in the ribosome. The polypeptide is Elongation factor G (Chlorobaculum tepidum (strain ATCC 49652 / DSM 12025 / NBRC 103806 / TLS) (Chlorobium tepidum)).